A 384-amino-acid polypeptide reads, in one-letter code: S-adenosylmethionine synthase (384 aa).

Residue histidine 15 participates in ATP binding. Aspartate 17 serves as a coordination point for Mg(2+). Glutamate 43 is a K(+) binding site. Residues glutamate 56 and glutamine 99 each coordinate L-methionine. The segment at 99 to 109 is flexible loop; sequence QSPDINQGVDK. Residues 164 to 166, 230 to 231, aspartate 239, 245 to 246, alanine 262, and lysine 266 contribute to the ATP site; these read DAK, RF, and RK. Aspartate 239 provides a ligand contact to L-methionine. Lysine 270 is a binding site for L-methionine.

The protein belongs to the AdoMet synthase family. Homotetramer; dimer of dimers. Mg(2+) serves as cofactor. The cofactor is K(+).

The protein resides in the cytoplasm. The enzyme catalyses L-methionine + ATP + H2O = S-adenosyl-L-methionine + phosphate + diphosphate. The protein operates within amino-acid biosynthesis; S-adenosyl-L-methionine biosynthesis; S-adenosyl-L-methionine from L-methionine: step 1/1. In terms of biological role, catalyzes the formation of S-adenosylmethionine (AdoMet) from methionine and ATP. The overall synthetic reaction is composed of two sequential steps, AdoMet formation and the subsequent tripolyphosphate hydrolysis which occurs prior to release of AdoMet from the enzyme. This Vibrio vulnificus (strain YJ016) protein is S-adenosylmethionine synthase.